The following is a 236-amino-acid chain: uncharacterized protein (236 aa).

The Response regulatory domain maps to threonine 3–arginine 116. At aspartate 54 the chain carries 4-aspartylphosphate. The 101-residue stretch at leucine 135–phenylalanine 235 folds into the HTH LytTR-type domain.

This is an uncharacterized protein from Shewanella oneidensis (strain ATCC 700550 / JCM 31522 / CIP 106686 / LMG 19005 / NCIMB 14063 / MR-1).